Reading from the N-terminus, the 425-residue chain is Trigger factor (425 aa).

The 74-residue stretch at 158 to 231 (GDLVRISMEV…VQEVYRRTLP (74 aa)) folds into the PPIase FKBP-type domain.

This sequence belongs to the FKBP-type PPIase family. Tig subfamily.

It localises to the cytoplasm. The catalysed reaction is [protein]-peptidylproline (omega=180) = [protein]-peptidylproline (omega=0). Functionally, involved in protein export. Acts as a chaperone by maintaining the newly synthesized protein in an open conformation. Functions as a peptidyl-prolyl cis-trans isomerase. This Thermotoga neapolitana (strain ATCC 49049 / DSM 4359 / NBRC 107923 / NS-E) protein is Trigger factor.